Consider the following 152-residue polypeptide: Endoribonuclease YbeY (152 aa).

Residues His111, His115, and His121 each coordinate Zn(2+).

It belongs to the endoribonuclease YbeY family. Zn(2+) serves as cofactor.

The protein resides in the cytoplasm. Functionally, single strand-specific metallo-endoribonuclease involved in late-stage 70S ribosome quality control and in maturation of the 3' terminus of the 16S rRNA. This is Endoribonuclease YbeY from Pseudomonas fluorescens (strain ATCC BAA-477 / NRRL B-23932 / Pf-5).